The primary structure comprises 533 residues: Laccase-2 (533 aa).

The N-terminal stretch at methionine 1–alanine 23 is a signal peptide. Plastocyanin-like domains follow at residues isoleucine 25 to tyrosine 171, isoleucine 173 to asparagine 336, and threonine 382 to aspartate 501. Cu cation is bound by residues histidine 98, histidine 100, histidine 143, and histidine 145. 2 disulfides stabilise this stretch: cysteine 119–cysteine 516 and cysteine 151–cysteine 238. Positions 427, 430, and 432 each coordinate Cu cation. An N-linked (GlcNAc...) (high mannose) asparagine glycan is attached at asparagine 467. Cu cation-binding residues include histidine 483, cysteine 484, histidine 485, and histidine 489.

Belongs to the multicopper oxidase family. The cofactor is Cu cation. Post-translationally, N-glycosylated at Asn-467; contains a high-mannose glycan with a varying number of mannose residues.

The protein resides in the secreted. It carries out the reaction 4 hydroquinone + O2 = 4 benzosemiquinone + 2 H2O. Lignin degradation and detoxification of lignin-derived products. This Pleurotus ostreatus (Oyster mushroom) protein is Laccase-2 (POX2).